A 160-amino-acid polypeptide reads, in one-letter code: 2-C-methyl-D-erythritol 2,4-cyclodiphosphate synthase (160 aa).

Positions 11 and 13 each coordinate a divalent metal cation. 4-CDP-2-C-methyl-D-erythritol 2-phosphate-binding positions include 11–13 (DVH) and 37–38 (HS). His-45 serves as a coordination point for a divalent metal cation. 4-CDP-2-C-methyl-D-erythritol 2-phosphate contacts are provided by residues 59–61 (DIG), 64–68 (FPDTD), 135–138 (TTTE), Phe-142, and Arg-145.

This sequence belongs to the IspF family. Homotrimer. It depends on a divalent metal cation as a cofactor.

It carries out the reaction 4-CDP-2-C-methyl-D-erythritol 2-phosphate = 2-C-methyl-D-erythritol 2,4-cyclic diphosphate + CMP. It functions in the pathway isoprenoid biosynthesis; isopentenyl diphosphate biosynthesis via DXP pathway; isopentenyl diphosphate from 1-deoxy-D-xylulose 5-phosphate: step 4/6. In terms of biological role, involved in the biosynthesis of isopentenyl diphosphate (IPP) and dimethylallyl diphosphate (DMAPP), two major building blocks of isoprenoid compounds. Catalyzes the conversion of 4-diphosphocytidyl-2-C-methyl-D-erythritol 2-phosphate (CDP-ME2P) to 2-C-methyl-D-erythritol 2,4-cyclodiphosphate (ME-CPP) with a corresponding release of cytidine 5-monophosphate (CMP). This chain is 2-C-methyl-D-erythritol 2,4-cyclodiphosphate synthase, found in Alcanivorax borkumensis (strain ATCC 700651 / DSM 11573 / NCIMB 13689 / SK2).